The sequence spans 255 residues: Thiazole synthase (255 aa).

Catalysis depends on lysine 96, which acts as the Schiff-base intermediate with DXP. 1-deoxy-D-xylulose 5-phosphate contacts are provided by residues glycine 157, alanine 183 to glycine 184, and asparagine 205 to threonine 206.

It belongs to the ThiG family. As to quaternary structure, homotetramer. Forms heterodimers with either ThiH or ThiS.

It is found in the cytoplasm. The enzyme catalyses [ThiS sulfur-carrier protein]-C-terminal-Gly-aminoethanethioate + 2-iminoacetate + 1-deoxy-D-xylulose 5-phosphate = [ThiS sulfur-carrier protein]-C-terminal Gly-Gly + 2-[(2R,5Z)-2-carboxy-4-methylthiazol-5(2H)-ylidene]ethyl phosphate + 2 H2O + H(+). It functions in the pathway cofactor biosynthesis; thiamine diphosphate biosynthesis. In terms of biological role, catalyzes the rearrangement of 1-deoxy-D-xylulose 5-phosphate (DXP) to produce the thiazole phosphate moiety of thiamine. Sulfur is provided by the thiocarboxylate moiety of the carrier protein ThiS. In vitro, sulfur can be provided by H(2)S. The sequence is that of Thiazole synthase from Bacillus pumilus (strain SAFR-032).